The following is a 231-amino-acid chain: 2-C-methyl-D-erythritol 4-phosphate cytidylyltransferase (231 aa).

This sequence belongs to the IspD/TarI cytidylyltransferase family. IspD subfamily.

It catalyses the reaction 2-C-methyl-D-erythritol 4-phosphate + CTP + H(+) = 4-CDP-2-C-methyl-D-erythritol + diphosphate. It functions in the pathway isoprenoid biosynthesis; isopentenyl diphosphate biosynthesis via DXP pathway; isopentenyl diphosphate from 1-deoxy-D-xylulose 5-phosphate: step 2/6. In terms of biological role, catalyzes the formation of 4-diphosphocytidyl-2-C-methyl-D-erythritol from CTP and 2-C-methyl-D-erythritol 4-phosphate (MEP). This chain is 2-C-methyl-D-erythritol 4-phosphate cytidylyltransferase, found in Lysinibacillus sphaericus (strain C3-41).